Consider the following 212-residue polypeptide: Adenylate kinase (212 aa).

14–19 (GSGKGT) contacts ATP. The interval 34–63 (STGDLFRKKISEDSRFAAQIQNYLSSGSYV) is NMP. Residues T35, R40, 61–63 (SYV), 89–92 (GYPR), and Q96 contribute to the AMP site. An LID region spans residues 126–163 (QRLFCQKCQKSYNLLLAKPKNGLKCDLDNTDLITRNDD). An ATP-binding site is contributed by R127. Residues C130 and C133 each contribute to the Zn(2+) site. 136 to 137 (SY) is an ATP binding site. Zn(2+)-binding residues include C150 and D153. Residues R160 and R171 each coordinate AMP. Q199 lines the ATP pocket.

This sequence belongs to the adenylate kinase family. As to quaternary structure, monomer.

It localises to the cytoplasm. It carries out the reaction AMP + ATP = 2 ADP. It participates in purine metabolism; AMP biosynthesis via salvage pathway; AMP from ADP: step 1/1. In terms of biological role, catalyzes the reversible transfer of the terminal phosphate group between ATP and AMP. Plays an important role in cellular energy homeostasis and in adenine nucleotide metabolism. This Mesomycoplasma hyopneumoniae (strain 232) (Mycoplasma hyopneumoniae) protein is Adenylate kinase.